A 956-amino-acid chain; its full sequence is Protein translocase subunit SecA (956 aa).

Residues Q87, 105–109 (GEGKT), and D524 each bind ATP. C940, C942, C951, and H952 together coordinate Zn(2+).

The protein belongs to the SecA family. In terms of assembly, monomer and homodimer. Part of the essential Sec protein translocation apparatus which comprises SecA, SecYEG and auxiliary proteins SecDF-YajC and YidC. It depends on Zn(2+) as a cofactor.

It localises to the cell inner membrane. Its subcellular location is the cytoplasm. It catalyses the reaction ATP + H2O + cellular proteinSide 1 = ADP + phosphate + cellular proteinSide 2.. Its function is as follows. Part of the Sec protein translocase complex. Interacts with the SecYEG preprotein conducting channel. Has a central role in coupling the hydrolysis of ATP to the transfer of proteins into and across the cell membrane, serving both as a receptor for the preprotein-SecB complex and as an ATP-driven molecular motor driving the stepwise translocation of polypeptide chains across the membrane. The polypeptide is Protein translocase subunit SecA (Beijerinckia indica subsp. indica (strain ATCC 9039 / DSM 1715 / NCIMB 8712)).